We begin with the raw amino-acid sequence, 277 residues long: Shikimate dehydrogenase (NADP(+)) (277 aa).

Shikimate contacts are provided by residues Ser15–Ser17 and Thr62. The active-site Proton acceptor is the Lys66. Glu78 contacts NADP(+). Positions 87 and 103 each coordinate shikimate. NADP(+) is bound by residues Gly127–Ala131, Asn151–Lys156, and Gly238.

This sequence belongs to the shikimate dehydrogenase family. In terms of assembly, homodimer.

It carries out the reaction shikimate + NADP(+) = 3-dehydroshikimate + NADPH + H(+). The protein operates within metabolic intermediate biosynthesis; chorismate biosynthesis; chorismate from D-erythrose 4-phosphate and phosphoenolpyruvate: step 4/7. Functionally, involved in the biosynthesis of the chorismate, which leads to the biosynthesis of aromatic amino acids. Catalyzes the reversible NADPH linked reduction of 3-dehydroshikimate (DHSA) to yield shikimate (SA). The sequence is that of Shikimate dehydrogenase (NADP(+)) from Shewanella frigidimarina (strain NCIMB 400).